A 136-amino-acid polypeptide reads, in one-letter code: Nanos homolog 2 (136 aa).

The interval 27–51 (KQRQEGEVAEEPNSRPQEKSEQDLE) is disordered. Basic and acidic residues predominate over residues 28-48 (QRQEGEVAEEPNSRPQEKSEQ). The Nanos-type zinc finger occupies 60 to 114 (ICNFCKHNGESRHVYTSHQLKTPEGVVVCPILRHYVCPLCGATGDQAHTLKYCPL). The Zn(2+) site is built by cysteine 61, cysteine 64, histidine 77, cysteine 88, cysteine 96, cysteine 99, histidine 107, and cysteine 112. 2 short sequence motifs (C2HC) span residues 61-88 (CNFC…VVVC) and 96-112 (CPLC…LKYC).

Belongs to the nanos family. In terms of assembly, interacts with CNOT1, CNOT3, CNOT6L, CNOT7 and CNOT9. As to expression, predominantly expressed in male germ cells. Expressed in self-renewing spermatogonial stem cells and developing gonads.

Its subcellular location is the cytoplasm. It is found in the P-body. The protein localises to the perinuclear region. Plays a key role in the sexual differentiation of germ cells by promoting the male fate but suppressing the female fate. Represses the female fate pathways by suppressing meiosis, which in turn results in the promotion of the male fate. Maintains the suppression of meiosis by preventing STRA8 expression, which is required for premeiotic DNA replication, after CYP26B1 is decreased. Regulates the localization of the CCR4-NOT deadenylation complex to P-bodies and plays a role in recruiting the complex to trigger the degradation of mRNAs involved in meiosis. Required for the maintenance of the spermatogonial stem cell population. Not essential for the assembly of P-bodies but is required for the maintenance of their normal state. The polypeptide is Nanos homolog 2 (Nanos2) (Mus musculus (Mouse)).